The primary structure comprises 213 residues: Orotate phosphoribosyltransferase (213 aa).

Lys26 is a binding site for 5-phospho-alpha-D-ribose 1-diphosphate. 34 to 35 (FF) lines the orotate pocket. Residues 72–73 (YK), Arg99, Lys100, Lys103, His105, and 124–132 (DDVITAGTA) contribute to the 5-phospho-alpha-D-ribose 1-diphosphate site. 2 residues coordinate orotate: Thr128 and Arg156.

This sequence belongs to the purine/pyrimidine phosphoribosyltransferase family. PyrE subfamily. In terms of assembly, homodimer. Requires Mg(2+) as cofactor.

The catalysed reaction is orotidine 5'-phosphate + diphosphate = orotate + 5-phospho-alpha-D-ribose 1-diphosphate. Its pathway is pyrimidine metabolism; UMP biosynthesis via de novo pathway; UMP from orotate: step 1/2. Functionally, catalyzes the transfer of a ribosyl phosphate group from 5-phosphoribose 1-diphosphate to orotate, leading to the formation of orotidine monophosphate (OMP). This chain is Orotate phosphoribosyltransferase, found in Photorhabdus laumondii subsp. laumondii (strain DSM 15139 / CIP 105565 / TT01) (Photorhabdus luminescens subsp. laumondii).